The following is a 159-amino-acid chain: Ribosomal RNA large subunit methyltransferase H (159 aa).

Residues leucine 76, glycine 108, and 127–132 contribute to the S-adenosyl-L-methionine site; that span reads FSKMTF.

This sequence belongs to the RNA methyltransferase RlmH family. Homodimer.

It is found in the cytoplasm. It catalyses the reaction pseudouridine(1915) in 23S rRNA + S-adenosyl-L-methionine = N(3)-methylpseudouridine(1915) in 23S rRNA + S-adenosyl-L-homocysteine + H(+). In terms of biological role, specifically methylates the pseudouridine at position 1915 (m3Psi1915) in 23S rRNA. The chain is Ribosomal RNA large subunit methyltransferase H from Halalkalibacterium halodurans (strain ATCC BAA-125 / DSM 18197 / FERM 7344 / JCM 9153 / C-125) (Bacillus halodurans).